The sequence spans 578 residues: Protein RIK (578 aa).

The interval 1–34 (MTEDNDEARVPLSDSSTTNDASRTRQRRKRKWDK) is disordered. In terms of domain architecture, KH spans 206–273 (SSNVAARIRG…KSIDDAKRLA (68 aa)). The span at 413-425 (ATSLSIPSDNASN) shows a compositional bias: polar residues. Positions 413-578 (ATSLSIPSDN…DPDEPLTTRS (166 aa)) are disordered. A compositionally biased stretch (pro residues) spans 472 to 492 (PPSPRSVMPPPPPKTIAPPPS). Composition is skewed to low complexity over residues 493-503 (KTMSPPSSKSM) and 510-521 (SKTMSPLSSKSM). Residues 560 to 572 (YGDDEDDDDDPDE) are compositionally biased toward acidic residues.

In terms of assembly, interacts with AS1. As to expression, expressed in vegetative tissues.

It localises to the nucleus. In Arabidopsis thaliana (Mouse-ear cress), this protein is Protein RIK (RIK).